The chain runs to 141 residues: Putative pre-16S rRNA nuclease (141 aa).

It belongs to the YqgF nuclease family.

It localises to the cytoplasm. Could be a nuclease involved in processing of the 5'-end of pre-16S rRNA. The protein is Putative pre-16S rRNA nuclease of Aliivibrio salmonicida (strain LFI1238) (Vibrio salmonicida (strain LFI1238)).